A 570-amino-acid polypeptide reads, in one-letter code: Urease subunit alpha (570 aa).

Residues Gly131–Phe570 enclose the Urease domain. The Ni(2+) site is built by His136, His138, and Lys219. Lys219 bears the N6-carboxylysine mark. A substrate-binding site is contributed by His221. Residues His248 and His274 each contribute to the Ni(2+) site. His322 serves as the catalytic Proton donor. Asp362 is a Ni(2+) binding site.

This sequence belongs to the metallo-dependent hydrolases superfamily. Urease alpha subunit family. Heterotrimer of UreA (gamma), UreB (beta) and UreC (alpha) subunits. Three heterotrimers associate to form the active enzyme. Requires Ni cation as cofactor. Carboxylation allows a single lysine to coordinate two nickel ions.

Its subcellular location is the cytoplasm. The catalysed reaction is urea + 2 H2O + H(+) = hydrogencarbonate + 2 NH4(+). It functions in the pathway nitrogen metabolism; urea degradation; CO(2) and NH(3) from urea (urease route): step 1/1. This Methylocella silvestris (strain DSM 15510 / CIP 108128 / LMG 27833 / NCIMB 13906 / BL2) protein is Urease subunit alpha.